Here is a 339-residue protein sequence, read N- to C-terminus: Annexin A2 (339 aa).

Serine 2 bears the N-acetylserine mark. The S100A10-binding site stretch occupies residues 2–24 (STVHEILCKLSLEGDHSTPPSAY). Tyrosine 24 carries the post-translational modification Phosphotyrosine; by SRC. The residue at position 26 (serine 26) is a Phosphoserine; by PKC. 2 Annexin repeats span residues 33–104 (FDAE…GLLK) and 105–176 (TPAQ…ALAK). N6-acetyllysine; alternate is present on lysine 49. Lysine 49 is covalently cross-linked (Glycyl lysine isopeptide (Lys-Gly) (interchain with G-Cter in SUMO1); alternate). Lysine 49 is covalently cross-linked (Glycyl lysine isopeptide (Lys-Gly) (interchain with G-Cter in SUMO2); alternate). Position 152 is an N6-acetyllysine (lysine 152). Serine 184 bears the Phosphoserine mark. 2 Annexin repeats span residues 189–261 (ELID…NLVQ) and 265–336 (NKPL…YLCG). Tyrosine 199 carries the phosphotyrosine modification. Position 227 is an N6-acetyllysine (lysine 227).

This sequence belongs to the annexin family. In terms of assembly, heterotetramer containing 2 light chains of S100A10/p11 and 2 heavy chains of ANXA2/p36. Interacts with ATP1B1. Interacts with DYSF. Interacts with COCH. Interacts (via repeat Annexin 1) with PCSK9 (via the C-terminal domain); the interaction inhibits the degradation of LDLR. Interacts with CEACAM1 (via the cytoplasmic domain); this interaction is regulated by phosphorylation of CEACAM1. Interacts with APPL2 and APPL1; targets APPL2 to endosomes and acting in parallel to RAB5A. Interacts with S100A4. May interact with UBAP2. Post-translationally, ISGylated. Expressed strongly in velvet antler reserve mesenchyme.

The protein localises to the secreted. It localises to the extracellular space. The protein resides in the extracellular matrix. Its subcellular location is the basement membrane. In terms of biological role, calcium-regulated membrane-binding protein whose affinity for calcium is greatly enhanced by anionic phospholipids. It binds two calcium ions with high affinity. May be involved in heat-stress response. Inhibits PCSK9-enhanced LDLR degradation, probably reduces PCSK9 protein levels via a translational mechanism but also competes with LDLR for binding with PCSK9. Binds to endosomes damaged by phagocytosis of particulate wear debris and participates in endosomal membrane stabilization, thereby limiting NLRP3 inflammasome activation. Required for endothelial cell surface plasmin generation and may support fibrinolytic surveillance and neoangiogenesis. This chain is Annexin A2 (ANXA2), found in Cervus elaphus (Red deer).